Here is a 374-residue protein sequence, read N- to C-terminus: UDP-N-acetylglucosamine--N-acetylmuramyl-(pentapeptide) pyrophosphoryl-undecaprenol N-acetylglucosamine transferase (374 aa).

Residues 35-37, Asn144, Arg185, Ser211, and Gln305 each bind UDP-N-acetyl-alpha-D-glucosamine; that span reads TGG.

It belongs to the glycosyltransferase 28 family. MurG subfamily.

The protein resides in the cell inner membrane. It catalyses the reaction di-trans,octa-cis-undecaprenyl diphospho-N-acetyl-alpha-D-muramoyl-L-alanyl-D-glutamyl-meso-2,6-diaminopimeloyl-D-alanyl-D-alanine + UDP-N-acetyl-alpha-D-glucosamine = di-trans,octa-cis-undecaprenyl diphospho-[N-acetyl-alpha-D-glucosaminyl-(1-&gt;4)]-N-acetyl-alpha-D-muramoyl-L-alanyl-D-glutamyl-meso-2,6-diaminopimeloyl-D-alanyl-D-alanine + UDP + H(+). It participates in cell wall biogenesis; peptidoglycan biosynthesis. Its function is as follows. Cell wall formation. Catalyzes the transfer of a GlcNAc subunit on undecaprenyl-pyrophosphoryl-MurNAc-pentapeptide (lipid intermediate I) to form undecaprenyl-pyrophosphoryl-MurNAc-(pentapeptide)GlcNAc (lipid intermediate II). The polypeptide is UDP-N-acetylglucosamine--N-acetylmuramyl-(pentapeptide) pyrophosphoryl-undecaprenol N-acetylglucosamine transferase (Trichodesmium erythraeum (strain IMS101)).